Consider the following 271-residue polypeptide: Type III pantothenate kinase (271 aa).

5 to 12 (DISNSVTK) contacts ATP. Residues tyrosine 85 and 92 to 95 (GADR) contribute to the substrate site. Catalysis depends on aspartate 94, which acts as the Proton acceptor. Aspartate 114 is a binding site for K(+). Threonine 117 serves as a coordination point for ATP. Position 169 (threonine 169) interacts with substrate.

It belongs to the type III pantothenate kinase family. Homodimer. The cofactor is NH4(+). Requires K(+) as cofactor.

It is found in the cytoplasm. The enzyme catalyses (R)-pantothenate + ATP = (R)-4'-phosphopantothenate + ADP + H(+). The protein operates within cofactor biosynthesis; coenzyme A biosynthesis; CoA from (R)-pantothenate: step 1/5. Its function is as follows. Catalyzes the phosphorylation of pantothenate (Pan), the first step in CoA biosynthesis. The polypeptide is Type III pantothenate kinase (Methylacidiphilum infernorum (isolate V4) (Methylokorus infernorum (strain V4))).